A 99-amino-acid chain; its full sequence is Malonate decarboxylase acyl carrier protein (99 aa).

Serine 25 bears the O-(phosphoribosyl dephospho-coenzyme A)serine mark.

It belongs to the MdcC family. Covalently binds the prosthetic group of malonate decarboxylase.

It is found in the cytoplasm. Its function is as follows. Subunit of malonate decarboxylase, it is an acyl carrier protein to which acetyl and malonyl thioester residues are bound via a 2'-(5''-phosphoribosyl)-3'-dephospho-CoA prosthetic group and turn over during the catalytic mechanism. This is Malonate decarboxylase acyl carrier protein from Azotobacter vinelandii (strain DJ / ATCC BAA-1303).